The chain runs to 350 residues: Phenylalanine--tRNA ligase alpha subunit (350 aa).

Position 271 (Glu-271) interacts with Mg(2+).

It belongs to the class-II aminoacyl-tRNA synthetase family. Phe-tRNA synthetase alpha subunit type 1 subfamily. In terms of assembly, tetramer of two alpha and two beta subunits. Mg(2+) serves as cofactor.

It localises to the cytoplasm. It catalyses the reaction tRNA(Phe) + L-phenylalanine + ATP = L-phenylalanyl-tRNA(Phe) + AMP + diphosphate + H(+). This is Phenylalanine--tRNA ligase alpha subunit from Acidovorax ebreus (strain TPSY) (Diaphorobacter sp. (strain TPSY)).